Reading from the N-terminus, the 576-residue chain is POU domain, class 6, transcription factor 1 (576 aa).

The tract at residues 65–88 (PAEAGSCDPDHSAEATVAARSPSE) is disordered. One can recognise a POU-specific domain in the interval 414–488 (EDGINLEEIR…VLEKWLMEAE (75 aa)). A DNA-binding region (homeobox) is located at residues 509–568 (KRKRRTSFTPQAIEALNAYFEKNPLPTGQEITEIAKELNYDREVVRVWFCNRRQTLKNTS).

Belongs to the POU transcription factor family. Class-6 subfamily. In terms of tissue distribution, isoform C1 and isoform C2 are found in the brain, while isoform C7 is found in the testis.

The protein localises to the nucleus. In terms of biological role, transcription factor that binds preferentially to a variant of the octamer motif (5'-ATGATAAT-3'). This is POU domain, class 6, transcription factor 1 (Pou6f1) from Mus musculus (Mouse).